The primary structure comprises 321 residues: Major immediate early protein (321 aa).

Residues C86–N139 form an RING-type zinc finger. The tract at residues L228–L249 is leucine-zipper.

Its subcellular location is the host nucleus. Plays some regulatory role in both viral DNA replication and transcriptional transactivation. This Lepidoptera (butterflies and moths) protein is Major immediate early protein (PE38).